The sequence spans 209 residues: Large ribosomal subunit protein uL3 (209 aa).

Positions 127–153 (NASRGPMSHGSKFHRAPGSMGAASDPS) are disordered.

The protein belongs to the universal ribosomal protein uL3 family. In terms of assembly, part of the 50S ribosomal subunit. Forms a cluster with proteins L14 and L19.

Functionally, one of the primary rRNA binding proteins, it binds directly near the 3'-end of the 23S rRNA, where it nucleates assembly of the 50S subunit. This chain is Large ribosomal subunit protein uL3, found in Clostridium perfringens (strain SM101 / Type A).